We begin with the raw amino-acid sequence, 396 residues long: uncharacterized protein (396 aa).

Belongs to the mycobacterial PPE family.

This is an uncharacterized protein from Mycobacterium tuberculosis (strain ATCC 25618 / H37Rv).